The chain runs to 908 residues: 26S proteasome non-ATPase regulatory subunit 2 (908 aa).

Position 1 is an N-acetylmethionine (methionine 1). Positions 1-52 (MEEGGRDKAPLQPQQPPATSPGSGDEKPSGKERRDAGDKDKEQELSEEDKQL) are disordered. A compositionally biased stretch (basic and acidic residues) spans 24–52 (GDEKPSGKERRDAGDKDKEQELSEEDKQL). Phosphoserine is present on residues serine 29 and serine 147. Position 194 is a phosphotyrosine (tyrosine 194). 2 positions are modified to phosphoserine: serine 361 and serine 363. PC repeat units lie at residues 409 to 442 (SAAA…YIKS), 443 to 479 (GALL…TMRL), 480 to 514 (GSIF…SMEV), 517 to 551 (VTAL…TELK), and 560 to 589 (LGLG…PFRS). At lysine 551 the chain carries N6-acetyllysine. Basic and acidic residues predominate over residues 623–643 (KEKEEDKDKKEKKDKDKKEAP). Residues 623–645 (KEKEEDKDKKEKKDKDKKEAPAD) are disordered. PC repeat units follow at residues 692–723 (LALA…EVSY) and 742–757 (AAML…KDPN). Residues 708–903 (DTLSKFSHDA…LEGFVILRKN (196 aa)) are required for interaction with UBLCP1.

The protein belongs to the proteasome subunit S2 family. As to quaternary structure, component of the 19S proteasome regulatory particle complex. The 26S proteasome consists of a 20S core particle (CP) and two 19S regulatory subunits (RP). The regulatory particle is made of a lid composed of 9 subunits, a base containing 6 ATPases and few additional components including PSMD2. Interacts with RPGRIP1L. Interacts with CRY1 in a KDM8-dependent manner. Interacts (via C-terminus) with phosphatase UBLCP1 (via ubiquitin-like domain); the interaction recruits UBLCP1 to the 19S regulatory particle where it dephosphorylates 19S subunit PSMC2/RPT1 which impairs PSMC2 ATPase activity and disrupts 26S proteasome assembly.

In terms of biological role, component of the 26S proteasome, a multiprotein complex involved in the ATP-dependent degradation of ubiquitinated proteins. This complex plays a key role in the maintenance of protein homeostasis by removing misfolded or damaged proteins, which could impair cellular functions, and by removing proteins whose functions are no longer required. Therefore, the proteasome participates in numerous cellular processes, including cell cycle progression, apoptosis, or DNA damage repair. Its function is as follows. Binds to the intracellular domain of tumor necrosis factor type 1 receptor. The binding domain of TRAP1 and TRAP2 resides outside the death domain of TNFR1. This chain is 26S proteasome non-ATPase regulatory subunit 2 (PSMD2), found in Bos taurus (Bovine).